We begin with the raw amino-acid sequence, 747 residues long: E3 UFM1-protein ligase 1 homolog (747 aa).

Positions 403–468 are disordered; the sequence is EKKKQCGSKA…GTVQVNSEEL (66 aa). A compositionally biased stretch (basic residues) spans 429–438; that stretch reads GGKGGKKGGK. Residues 439–449 are compositionally biased toward gly residues; it reads GGKNGGGGGKG. The span at 450–465 shows a compositional bias: polar residues; that stretch reads ATSSVPTGSGTVQVNS.

The protein belongs to the UFL1 family.

E3 UFM1-protein ligase that mediates ufmylation of target proteins. The sequence is that of E3 UFM1-protein ligase 1 homolog (ufl-1) from Caenorhabditis briggsae.